Consider the following 400-residue polypeptide: Argininosuccinate synthase (400 aa).

Residues 11–19 (AYSGGLDTS) and A38 each bind ATP. Positions 89 and 94 each coordinate L-citrulline. G119 contacts ATP. T121, N125, and D126 together coordinate L-aspartate. N125 provides a ligand contact to L-citrulline. L-citrulline is bound by residues R129, S179, S188, E264, and Y276.

Belongs to the argininosuccinate synthase family. Type 1 subfamily. In terms of assembly, homotetramer.

It localises to the cytoplasm. It catalyses the reaction L-citrulline + L-aspartate + ATP = 2-(N(omega)-L-arginino)succinate + AMP + diphosphate + H(+). It participates in amino-acid biosynthesis; L-arginine biosynthesis; L-arginine from L-ornithine and carbamoyl phosphate: step 2/3. This Oleidesulfovibrio alaskensis (strain ATCC BAA-1058 / DSM 17464 / G20) (Desulfovibrio alaskensis) protein is Argininosuccinate synthase.